The sequence spans 176 residues: NAD(P)H-quinone oxidoreductase subunit 6, chloroplastic (176 aa).

Transmembrane regions (helical) follow at residues 10–30 (FLLV…VLLP), 33–53 (IFSA…YILA), 61–81 (AQLL…VMFM), 92–112 (LWTV…FSLI), and 152–172 (FFLP…GAIS).

The protein belongs to the complex I subunit 6 family. In terms of assembly, NDH is composed of at least 16 different subunits, 5 of which are encoded in the nucleus.

The protein localises to the plastid. It is found in the chloroplast thylakoid membrane. The enzyme catalyses a plastoquinone + NADH + (n+1) H(+)(in) = a plastoquinol + NAD(+) + n H(+)(out). It catalyses the reaction a plastoquinone + NADPH + (n+1) H(+)(in) = a plastoquinol + NADP(+) + n H(+)(out). In terms of biological role, NDH shuttles electrons from NAD(P)H:plastoquinone, via FMN and iron-sulfur (Fe-S) centers, to quinones in the photosynthetic chain and possibly in a chloroplast respiratory chain. The immediate electron acceptor for the enzyme in this species is believed to be plastoquinone. Couples the redox reaction to proton translocation, and thus conserves the redox energy in a proton gradient. The chain is NAD(P)H-quinone oxidoreductase subunit 6, chloroplastic (ndhG) from Arabis hirsuta (Hairy rock-cress).